Consider the following 854-residue polypeptide: Disrupted in schizophrenia 1 protein (854 aa).

The segment covering 1–18 (MPGGGPQGAPAAAGGGGV) has biased composition (gly residues). Disordered stretches follow at residues 1-24 (MPGG…RAGS), 179-205 (SAEL…SHSA), 221-257 (GERG…GPHE), and 278-323 (AQAA…SGDA). The segment at 1–292 (MPGGGPQGAP…NSSRPERDMH (292 aa)) is interaction with MAP1A. An Interaction with FBXW7 motif is present at residues 197–203 (PTPPGSH). The span at 285 to 295 (SRPERDMHSLP) shows a compositional bias: basic and acidic residues. The interaction with TRAF3IP1 stretch occupies residues 293-696 (SLPDMDPGSS…LGKVWEADLE (404 aa)). The segment covering 296-309 (DMDPGSSSSLDPSL) has biased composition (low complexity). 3 coiled-coil regions span residues 366–394 (ENDD…HFQL), 452–505 (ITRR…CDLT), and 602–666 (WTAK…SVKE). Residue Lys372 forms a Glycyl lysine isopeptide (Lys-Gly) (interchain with G-Cter in ubiquitin) linkage. A required for localization to punctate cytoplasmic foci region spans residues 440–597 (LEPTAQDSLH…LLEAKMHAIS (158 aa)). The segment at 446-854 (DSLHVSITRR…MTAGVHEAQA (409 aa)) is necessary and sufficient for interaction with PCNT and localization at the centrosome. The interaction with ATF4 and ATF5 stretch occupies residues 598-854 (GNHFWTAKDL…MTAGVHEAQA (257 aa)). A disordered region spans residues 716–739 (VEDERQMDDLEGAAPPIPPRLHSE). The interval 727-854 (GAAPPIPPRL…MTAGVHEAQA (128 aa)) is interaction with PAFAH1B1. Residues 802 to 830 (SHDEDLIQSLRRELQMVKETLQAMILQLQ) adopt a coiled-coil conformation. Positions 802-835 (SHDEDLIQSLRRELQMVKETLQAMILQLQPAKEA) are interaction with NDEL1.

In terms of assembly, interacts with NDEL1. Interacts with CCDC88A (via C-terminus); the interaction is direct. Interacts with GSK3B. Interacts with tubulin alpha, ACTN2, ANKHD1, ATF4, ATF5, CEP63, EIF3S3, MAP1A, NDEL1, PAFAH1B1, RANBP9, SPTBN4, SYNE1 and TRAF3IP1. Interaction with microtubules may be mediated in part by TRAF3IP1. Interacts (via C-terminal) with PCNT. Interacts with CHCHD6. Interacts with CCDC141. Interacts with FBXW7, the substrate-recognition component of a SCF (SKP1-CUL1-F-box protein) E3 ubiquitin-protein ligase complex; the interaction targets DISC1 for proteasomal degradation. Interacts with ZNF365. Interacts with ATF4; inhibiting ATF4 transcription factor activity by disrupting ATF4 dimerization and DNA-binding. Interacts with PDE4B (isoform PDE4B5). In terms of processing, ubiquitinated. Ubiquitination with 'Lys-48'-linked polyubiquitin chains leads to its proteasomal degradation. In terms of tissue distribution, ubiquitous. Highly expressed in the dentate gyrus of the hippocampus. Also expressed in the temporal and parahippocampal cortices and cells of the white matter.

It is found in the cytoplasm. Its subcellular location is the cytoskeleton. The protein localises to the mitochondrion. It localises to the microtubule organizing center. The protein resides in the centrosome. It is found in the postsynaptic density. Involved in the regulation of multiple aspects of embryonic and adult neurogenesis. Required for neural progenitor proliferation in the ventrical/subventrical zone during embryonic brain development and in the adult dentate gyrus of the hippocampus. Participates in the Wnt-mediated neural progenitor proliferation as a positive regulator by modulating GSK3B activity and CTNNB1 abundance. Plays a role as a modulator of the AKT-mTOR signaling pathway controlling the tempo of the process of newborn neurons integration during adult neurogenesis, including neuron positioning, dendritic development and synapse formation. Inhibits the activation of AKT-mTOR signaling upon interaction with CCDC88A. Regulates the migration of early-born granule cell precursors toward the dentate gyrus during the hippocampal development. Inhibits ATF4 transcription factor activity in neurons by disrupting ATF4 dimerization and DNA-binding. Plays a role, together with PCNT, in the microtubule network formation. This chain is Disrupted in schizophrenia 1 protein, found in Homo sapiens (Human).